We begin with the raw amino-acid sequence, 684 residues long: Endo-1,4-beta-xylanase A (684 aa).

A signal peptide spans 1–34 (MMRSLKSRKLVFILAMLFLINAIVSLKFITYSSA). CBM-cenC domains follow at residues 40 to 190 (KSKY…IKDL) and 193 to 342 (AYVL…ISDE). In terms of domain architecture, GH10 spans 350-678 (DYNLPSLCEK…KFAFWSLIDP (329 aa)). Residue Glu490 is the Proton donor of the active site. Glu598 serves as the catalytic Nucleophile.

This sequence belongs to the glycosyl hydrolase 10 (cellulase F) family.

It catalyses the reaction Endohydrolysis of (1-&gt;4)-beta-D-xylosidic linkages in xylans.. It functions in the pathway glycan degradation; xylan degradation. This chain is Endo-1,4-beta-xylanase A (xynA), found in Caldicellulosiruptor sp. (strain Rt8B.4).